Reading from the N-terminus, the 465-residue chain is UDP-N-acetylmuramoylalanine--D-glutamate ligase (465 aa).

Position 124–130 (124–130 (GSDGKTT)) interacts with ATP.

Belongs to the MurCDEF family.

It is found in the cytoplasm. The enzyme catalyses UDP-N-acetyl-alpha-D-muramoyl-L-alanine + D-glutamate + ATP = UDP-N-acetyl-alpha-D-muramoyl-L-alanyl-D-glutamate + ADP + phosphate + H(+). The protein operates within cell wall biogenesis; peptidoglycan biosynthesis. Cell wall formation. Catalyzes the addition of glutamate to the nucleotide precursor UDP-N-acetylmuramoyl-L-alanine (UMA). This is UDP-N-acetylmuramoylalanine--D-glutamate ligase from Ruminiclostridium cellulolyticum (strain ATCC 35319 / DSM 5812 / JCM 6584 / H10) (Clostridium cellulolyticum).